Here is a 103-residue protein sequence, read N- to C-terminus: UPF0145 protein EF_0241 (103 aa).

The protein belongs to the UPF0145 family.

This is UPF0145 protein EF_0241 from Enterococcus faecalis (strain ATCC 700802 / V583).